The chain runs to 352 residues: Phosphoribosylformylglycinamidine cyclo-ligase (352 aa).

This sequence belongs to the AIR synthase family.

It is found in the cytoplasm. The enzyme catalyses 2-formamido-N(1)-(5-O-phospho-beta-D-ribosyl)acetamidine + ATP = 5-amino-1-(5-phospho-beta-D-ribosyl)imidazole + ADP + phosphate + H(+). The protein operates within purine metabolism; IMP biosynthesis via de novo pathway; 5-amino-1-(5-phospho-D-ribosyl)imidazole from N(2)-formyl-N(1)-(5-phospho-D-ribosyl)glycinamide: step 2/2. The polypeptide is Phosphoribosylformylglycinamidine cyclo-ligase (Hahella chejuensis (strain KCTC 2396)).